Here is a 160-residue protein sequence, read N- to C-terminus: Large ribosomal subunit protein eL21 (160 aa).

Basic and acidic residues-rich tracts occupy residues 112-123 (NDQKKKEAKEKG) and 136-145 (REAHFVRTNG). Residues 112–145 (NDQKKKEAKEKGTWVQLKRQPAPPREAHFVRTNG) are disordered.

This sequence belongs to the eukaryotic ribosomal protein eL21 family. Component of the large ribosomal subunit.

The protein localises to the cytoplasm. Its subcellular location is the cytosol. It is found in the endoplasmic reticulum. Component of the large ribosomal subunit. The ribosome is a large ribonucleoprotein complex responsible for the synthesis of proteins in the cell. This Oryctolagus cuniculus (Rabbit) protein is Large ribosomal subunit protein eL21 (RPL21).